Reading from the N-terminus, the 185-residue chain is Deoxyuridine 5'-triphosphate nucleotidohydrolase (185 aa).

A disordered region spans residues 1-23 (MSHLQAHMQRNNKESHSLSPFSQ). Substrate-binding positions include 95–97 (RSG), N108, 112–114 (TID), and K122. A disordered region spans residues 160–185 (DQKDSSQTPSNEGSRGADGFGSTGHD). Residues 175 to 185 (GADGFGSTGHD) show a composition bias toward gly residues.

It belongs to the dUTPase family. Requires Mg(2+) as cofactor.

It carries out the reaction dUTP + H2O = dUMP + diphosphate + H(+). The protein operates within pyrimidine metabolism; dUMP biosynthesis; dUMP from dCTP (dUTP route): step 2/2. Its function is as follows. This enzyme is involved in nucleotide metabolism: it produces dUMP, the immediate precursor of thymidine nucleotides and it decreases the intracellular concentration of dUTP so that uracil cannot be incorporated into DNA. This is Deoxyuridine 5'-triphosphate nucleotidohydrolase from Bartonella quintana (strain Toulouse) (Rochalimaea quintana).